A 265-amino-acid polypeptide reads, in one-letter code: PBSX phage terminase small subunit (265 aa).

A disordered region spans residues 241–265 (KQKAEKTDDSQEPIEIMIKRKERKS).

This sequence to B.subtilis YqaS and B.subtilis phage SPP1 terminase small subunit. Dimer of a small and a large subunit.

Functionally, functions as a terminase. The chain is PBSX phage terminase small subunit (xtmA) from Bacillus subtilis (strain 168).